Consider the following 281-residue polypeptide: Undecaprenyl-diphosphatase (281 aa).

8 helical membrane passes run 2-22, 46-66, 93-113, 115-135, 152-172, 190-210, 228-248, and 259-279; these read FDLIKAIIIGIIEGLTEFLPV, AFSSVFDYSIQLGAIFAVIQL, VIVGVLPAIVFGFALNDFMDA, LMNFWVVSATLIIYGIAFIVI, ITFKLALYIGLFQVLSIVPGT, FVAAEFSFFLSIPVMFGVTFL, IVMLVGFIVSWIVAWFAIKFM, and VFGYYRIIIGAIFLVFGILGI.

This sequence belongs to the UppP family.

It is found in the cell membrane. It catalyses the reaction di-trans,octa-cis-undecaprenyl diphosphate + H2O = di-trans,octa-cis-undecaprenyl phosphate + phosphate + H(+). Its function is as follows. Catalyzes the dephosphorylation of undecaprenyl diphosphate (UPP). Confers resistance to bacitracin. The polypeptide is Undecaprenyl-diphosphatase (Leuconostoc mesenteroides subsp. mesenteroides (strain ATCC 8293 / DSM 20343 / BCRC 11652 / CCM 1803 / JCM 6124 / NCDO 523 / NBRC 100496 / NCIMB 8023 / NCTC 12954 / NRRL B-1118 / 37Y)).